The following is a 319-amino-acid chain: L-galactose dehydrogenase (319 aa).

Y59 acts as the Proton donor in catalysis. The region spanning 122–269 (HCHDIEFGSL…ANKEISSVLV (148 aa)) is the SIS domain. Residue H124 participates in substrate binding.

This sequence belongs to the aldo/keto reductase family.

It catalyses the reaction L-galactose + NAD(+) = L-galactono-1,4-lactone + NADH + H(+). Catalyzes the oxidation of L-galactose to L-galactono-1,4-lactone in the presence of NAD(+). Uses NAD(+) as a hydrogen acceptor much more efficiently than NADP(+). This chain is L-galactose dehydrogenase (LGALDH), found in Arabidopsis thaliana (Mouse-ear cress).